The sequence spans 677 residues: MTQVAKKILVTCALPYANGSIHLGHMLEHIQADVWVRYQRMRGHEVNFICADDAHGTPIMLKAQQLGITPEQMIGEMRHEHQTDFAGFNISYDNYHSTHSDENRELSELIYTRLKENGFIKNRTISQLYDPEKGMFLPDRFVKGTCPKCKSADQYGDNCEVCGATYSPTELIEPKSVVSGATPVMRDSEHFFFDLPSFSEMLQAWTRSGALQEQVANKMQEWFESGLQQWDISRDAPYFGFEIPNAPGKYFYVWLDAPIGYMGSFKNLCDKRGDTTSFEEYWKKDSDAELYHFIGKDIVYFHSLFWPAMLEGSNFRKPTNLFVHGYVTVNGAKMSKSRGTFIKASTWLNHFDADSLRYYYTAKLSSRIDDIDLNLEDFVQRVNADIVNKVVNLASRNAGFINKRFDGVLAAELADPQLYKTFTDAAAAIGEAWESREFGKAIREIMALADVANRYVDEQAPWVVAKQEGRDADLQAICSMGINLFRVLMTYLKPVLPTLSERVEAFLNCELSWEGIQQPLLGHKINAFKALYNRIDMKQVEALVDASKEEVKAAAAPVTGPLADSPIQETITFDDFAKVDLRVALIENAGFVEGSDKLLRLTLDLGGEKRNVFSGIRSAYPDPRALIGRQTVMVANLAPRKMRFGVSEGMVMAAGPGGKDIFLLSPDDGAKPGQQVK.

The 'HIGH' region signature appears at 15–25 (PYANGSIHLGH). Cysteine 146, cysteine 149, cysteine 159, and cysteine 162 together coordinate Zn(2+). The 'KMSKS' region signature appears at 333–337 (KMSKS). Lysine 336 provides a ligand contact to ATP. The region spanning 575 to 677 (DFAKVDLRVA…DGAKPGQQVK (103 aa)) is the tRNA-binding domain.

It belongs to the class-I aminoacyl-tRNA synthetase family. MetG type 1 subfamily. In terms of assembly, homodimer. Zn(2+) serves as cofactor.

It is found in the cytoplasm. It catalyses the reaction tRNA(Met) + L-methionine + ATP = L-methionyl-tRNA(Met) + AMP + diphosphate. Is required not only for elongation of protein synthesis but also for the initiation of all mRNA translation through initiator tRNA(fMet) aminoacylation. The protein is Methionine--tRNA ligase of Salmonella arizonae (strain ATCC BAA-731 / CDC346-86 / RSK2980).